A 102-amino-acid chain; its full sequence is NADH-quinone oxidoreductase subunit K 2 (102 aa).

The next 3 membrane-spanning stretches (helical) occupy residues 6-26 (LEAF…GIIA), 30-50 (LVTV…ALVG), and 66-86 (FIIA…IAIF).

The protein belongs to the complex I subunit 4L family. NDH-1 is composed of 14 different subunits. Subunits NuoA, H, J, K, L, M, N constitute the membrane sector of the complex.

It localises to the cell inner membrane. The catalysed reaction is a quinone + NADH + 5 H(+)(in) = a quinol + NAD(+) + 4 H(+)(out). Its function is as follows. NDH-1 shuttles electrons from NADH, via FMN and iron-sulfur (Fe-S) centers, to quinones in the respiratory chain. The immediate electron acceptor for the enzyme in this species is believed to be ubiquinone. Couples the redox reaction to proton translocation (for every two electrons transferred, four hydrogen ions are translocated across the cytoplasmic membrane), and thus conserves the redox energy in a proton gradient. The polypeptide is NADH-quinone oxidoreductase subunit K 2 (Aquifex aeolicus (strain VF5)).